Reading from the N-terminus, the 423-residue chain is Serine hydroxymethyltransferase (423 aa).

Residue 121–123 (GHI) participates in (6S)-5,6,7,8-tetrahydrofolate binding. Residue Lys227 is modified to N6-(pyridoxal phosphate)lysine. Residue Glu242 participates in (6S)-5,6,7,8-tetrahydrofolate binding.

The protein belongs to the SHMT family. As to quaternary structure, homodimer. Requires pyridoxal 5'-phosphate as cofactor.

Its subcellular location is the cytoplasm. The catalysed reaction is 5,10-methylenetetrahydromethanopterin + glycine + H2O = 5,6,7,8-tetrahydromethanopterin + L-serine. The protein operates within amino-acid biosynthesis; glycine biosynthesis; glycine from L-serine: step 1/1. Functionally, catalyzes the reversible interconversion of serine and glycine with tetrahydromethanopterin (H4MPT) serving as the one-carbon carrier. Also exhibits a pteridine-independent aldolase activity toward beta-hydroxyamino acids, producing glycine and aldehydes, via a retro-aldol mechanism. This Methanothermobacter marburgensis (strain ATCC BAA-927 / DSM 2133 / JCM 14651 / NBRC 100331 / OCM 82 / Marburg) (Methanobacterium thermoautotrophicum) protein is Serine hydroxymethyltransferase.